The primary structure comprises 556 residues: Urease subunit alpha 1 (556 aa).

Residues 127–556 form the Urease domain; it reads GAVDTHVHLL…SVSLNRLYFL (430 aa). Ni(2+) contacts are provided by His-132, His-134, and Lys-212. Lys-212 is subject to N6-carboxylysine. Substrate is bound at residue His-214. Residues His-241 and His-267 each contribute to the Ni(2+) site. Catalysis depends on His-315, which acts as the Proton donor. Asp-355 contacts Ni(2+).

Belongs to the metallo-dependent hydrolases superfamily. Urease alpha subunit family. As to quaternary structure, may form a heterohexamer of 3 UreC (alpha) and 3 UreAB (gamma/beta) subunits. May also form a heterotrimer of UreA (gamma), UreB (beta) and UreC (alpha) subunits. Three heterotrimers associate to form the active enzyme. Requires Ni cation as cofactor. Carboxylation allows a single lysine to coordinate two nickel ions.

The protein localises to the cytoplasm. The catalysed reaction is urea + 2 H2O + H(+) = hydrogencarbonate + 2 NH4(+). The protein operates within nitrogen metabolism; urea degradation; CO(2) and NH(3) from urea (urease route): step 1/1. The polypeptide is Urease subunit alpha 1 (Streptomyces avermitilis (strain ATCC 31267 / DSM 46492 / JCM 5070 / NBRC 14893 / NCIMB 12804 / NRRL 8165 / MA-4680)).